The sequence spans 211 residues: Guanylate kinase (211 aa).

A Guanylate kinase-like domain is found at 7 to 185 (GLLIVVTGPS…AVAELRAIIM (179 aa)). 14 to 21 (GPSAVGKG) serves as a coordination point for ATP.

This sequence belongs to the guanylate kinase family.

Its subcellular location is the cytoplasm. It carries out the reaction GMP + ATP = GDP + ADP. Its function is as follows. Essential for recycling GMP and indirectly, cGMP. The chain is Guanylate kinase from Symbiobacterium thermophilum (strain DSM 24528 / JCM 14929 / IAM 14863 / T).